Reading from the N-terminus, the 329-residue chain is Olfactory receptor 52L1 (329 aa).

At 1–43 the chain is on the extracellular side; the sequence is MTLVSFFSFLSKPLIMLLSNSSWRLSQPSFLLVGIPGLEESQH. An N-linked (GlcNAc...) asparagine glycan is attached at N20. Residues 44 to 64 traverse the membrane as a helical segment; that stretch reads WIALPLGILYLLALVGNVTIL. Residues 65-72 are Cytoplasmic-facing; that stretch reads FIIWMDPS. The chain crosses the membrane as a helical span at residues 73–93; it reads LHQSMYLFLSMLAAIDLVLAS. The Extracellular portion of the chain corresponds to 94 to 117; that stretch reads STAPKALAVLLVHAHEIGYIVCLI. Residues C115 and C207 are joined by a disulfide bond. The helical transmembrane segment at 118 to 138 threads the bilayer; sequence QMFFIHAFSSMESGVLVAMAL. Over 139-157 the chain is Cytoplasmic; that stretch reads DRYVAICHPLHHSTILHPG. A helical transmembrane segment spans residues 158-178; the sequence is VIGRIGMVVLVRGLLLLIPFP. At 179–214 the chain is on the extracellular side; sequence ILLGTLIFCQATIIGHAYCEHMAVVKLACSETTVNR. Residues 215-235 form a helical membrane-spanning segment; sequence AYGLTMALLVIGLDVLAIGVS. Topologically, residues 236 to 255 are cytoplasmic; sequence YAHILQAVLKVPGSEARLKA. Residues 256-276 form a helical membrane-spanning segment; that stretch reads FSTCGSHICVILVFYVPGIFS. Topologically, residues 277-291 are extracellular; that stretch reads FLTHRFGHHVPHHVH. A helical membrane pass occupies residues 292–312; that stretch reads VLLATRYLLMPPALNPLVYGV. Over 313–329 the chain is Cytoplasmic; it reads KTQQIRQRVLRVFTQKD.

The protein belongs to the G-protein coupled receptor 1 family.

It is found in the cell membrane. In terms of biological role, odorant receptor. The chain is Olfactory receptor 52L1 (OR52L1) from Homo sapiens (Human).